The following is a 297-amino-acid chain: Probable GTP 3',8-cyclase (297 aa).

One can recognise a Radical SAM core domain in the interval 4–227; sequence RYGRQIRSFR…MQNRKKYVID (224 aa). Residue R13 coordinates GTP. [4Fe-4S] cluster is bound by residues C20 and C24. Residue Y26 coordinates S-adenosyl-L-methionine. C27 contacts [4Fe-4S] cluster. K61 is a GTP binding site. G65 lines the S-adenosyl-L-methionine pocket. Residue T91 coordinates GTP. S115 lines the S-adenosyl-L-methionine pocket. K152 provides a ligand contact to GTP. Residues C243 and C246 each coordinate [4Fe-4S] cluster. Residue 248 to 250 coordinates GTP; sequence RIR. C260 serves as a coordination point for [4Fe-4S] cluster.

Belongs to the radical SAM superfamily. MoaA family. [4Fe-4S] cluster is required as a cofactor.

The catalysed reaction is GTP + AH2 + S-adenosyl-L-methionine = (8S)-3',8-cyclo-7,8-dihydroguanosine 5'-triphosphate + 5'-deoxyadenosine + L-methionine + A + H(+). The protein operates within cofactor biosynthesis; molybdopterin biosynthesis. Functionally, catalyzes the cyclization of GTP to (8S)-3',8-cyclo-7,8-dihydroguanosine 5'-triphosphate. This Methanococcus maripaludis (strain DSM 14266 / JCM 13030 / NBRC 101832 / S2 / LL) protein is Probable GTP 3',8-cyclase.